The following is a 180-amino-acid chain: MIKRRINADELELEERVVQINRVSKVVKGGRRFSFSTVVVVGDGKGHVGIGMGKAAEVPEAIRKGVEAAKKNLIRVPLSGTTIPHEVQMEFAASKVRLLPAAPGTGVIAGRGVRPVLEMAGIKDVLSKRYGSNNPINVVKATFKALSALTSLEEQARMRGMTPRELNLRRMRREPAPQEA.

The S5 DRBM domain maps to 13-76 (LEERVVQINR…EAAKKNLIRV (64 aa)).

The protein belongs to the universal ribosomal protein uS5 family. As to quaternary structure, part of the 30S ribosomal subunit. Contacts proteins S4 and S8.

Functionally, with S4 and S12 plays an important role in translational accuracy. In terms of biological role, located at the back of the 30S subunit body where it stabilizes the conformation of the head with respect to the body. In Roseiflexus sp. (strain RS-1), this protein is Small ribosomal subunit protein uS5.